A 391-amino-acid chain; its full sequence is Ferrochelatase (391 aa).

H196 and E281 together coordinate Fe cation.

Belongs to the ferrochelatase family.

Its subcellular location is the cytoplasm. The catalysed reaction is heme b + 2 H(+) = protoporphyrin IX + Fe(2+). It participates in porphyrin-containing compound metabolism; protoheme biosynthesis; protoheme from protoporphyrin-IX: step 1/1. Functionally, catalyzes the ferrous insertion into protoporphyrin IX. This is Ferrochelatase from Prochlorococcus marinus (strain NATL2A).